The primary structure comprises 640 residues: Threonine--tRNA ligase (640 aa).

The 61-residue stretch at 1–61 folds into the TGS domain; the sequence is MPVITLPDGS…SNDATLQIIT (61 aa). Residues 242–533 are catalytic; sequence DHRKIGKQLD…LIEHYAGVFP (292 aa). Zn(2+) is bound by residues cysteine 333, histidine 384, and histidine 510.

The protein belongs to the class-II aminoacyl-tRNA synthetase family. In terms of assembly, homodimer. The cofactor is Zn(2+).

The protein resides in the cytoplasm. It carries out the reaction tRNA(Thr) + L-threonine + ATP = L-threonyl-tRNA(Thr) + AMP + diphosphate + H(+). Its function is as follows. Catalyzes the attachment of threonine to tRNA(Thr) in a two-step reaction: L-threonine is first activated by ATP to form Thr-AMP and then transferred to the acceptor end of tRNA(Thr). Also edits incorrectly charged L-seryl-tRNA(Thr). This Pseudomonas putida (strain ATCC 700007 / DSM 6899 / JCM 31910 / BCRC 17059 / LMG 24140 / F1) protein is Threonine--tRNA ligase.